A 514-amino-acid polypeptide reads, in one-letter code: Cytochrome c-552 (514 aa).

An N-terminal signal peptide occupies residues 1–21; sequence MKFKLLLAGSLVAVGAMALLA. Heme c contacts are provided by H101, C129, C132, K133, C167, C170, H171, C210, C213, and H214. Ca(2+) contacts are provided by E216, Y217, K279, and Q281. Y217 provides a ligand contact to substrate. H282 contributes to the substrate binding site. Residues H293, C300, C303, H304, H318, C332, C335, H336, and H411 each contribute to the heme c site.

Belongs to the cytochrome c-552 family. As to quaternary structure, homodimer. Probably also exists as a membrane-associated heterooligomeric complex. It depends on Ca(2+) as a cofactor. Heme c is required as a cofactor.

It is found in the periplasm. It catalyses the reaction 6 Fe(III)-[cytochrome c] + NH4(+) + 2 H2O = 6 Fe(II)-[cytochrome c] + nitrite + 8 H(+). It functions in the pathway nitrogen metabolism; nitrate reduction (assimilation). Functionally, catalyzes the reduction of nitrite to ammonia, consuming six electrons in the process. Has very low activity toward hydroxylamine, and even lower activity toward sulfite. Sulfite reductase activity is maximal at neutral pH. The chain is Cytochrome c-552 (nrfA) from Sulfurospirillum deleyianum.